The following is a 305-amino-acid chain: CRISPR-associated endonuclease Cas1 (305 aa).

The segment at 96–278 (SDKLLYQAKL…EDVLAAGEIQ (183 aa)) is sufficient for cleavage of ssRNA, ssDNA and Holliday junction DNA. Positions 141, 208, and 221 each coordinate Mg(2+). Positions 278 to 305 (QPPAPPEDAQPVAIPLPVSLGDAGHRSS) are disordered.

Belongs to the CRISPR-associated endonuclease Cas1 family. As to quaternary structure, homodimer. Part of the Cas1-Cas2 complex. Interacts with RecB, RecC, RuvB, CasC and CasE. Forms a hexamer with 2 Cas1 dimers sandwiching a Cas2 dimer. The DNA lies across a flat surface extending from 1 Cas1 dimer, across the Cas2 dimer and contacting the other Cas1 dimer. Only 1 Cas1 protein from each dimer is catalytic, the other interacts with the Cas2 dimer and possibly target DNA. Mg(2+) serves as cofactor.

It localises to the cytoplasm. Its activity is regulated as follows. Nuclease activity partially inhibited by CasE. Functionally, CRISPR (clustered regularly interspaced short palindromic repeat), is an adaptive immune system that provides protection against mobile genetic elements (viruses, transposable elements and conjugative plasmids). CRISPR clusters contain sequences complementary to antecedent mobile elements and target invading nucleic acids. CRISPR clusters are transcribed and processed into CRISPR RNA (crRNA). The Cas1-Cas2 complex is involved in CRISPR adaptation, the first stage of CRISPR immunity, being required for the addition/removal of CRISPR spacers at the leader end of the CRISPR locus. The Cas1-Cas2 complex introduces staggered nicks into both strands of the CRISPR array near the leader repeat and joins the 5'-ends of the repeat strands with the 3'-ends of the new spacer sequence. Spacer DNA integration requires supercoiled target DNA and 3'-OH ends on the inserted (spacer) DNA and probably initiates with a nucleophilic attack of the C 3'-OH end of the protospacer on the minus strand of the first repeat sequence. Expression of Cas1-Cas2 in a strain lacking both genes permits spacer acquisition. Non-specifically binds DNA; the Cas1-Cas2 complex preferentially binds CRISPR-locus DNA. Highest binding is seen to a dual forked DNA complex with 3'-overhangs and a protospacer-adjacent motif-complement specifically positioned. The protospacer DNA lies across a flat surface extending from 1 Cas1 dimer, across the Cas2 dimer and contacting the other Cas1 dimer; the 23 bp-long ds section of the DNA is bracketed by 1 Tyr-22 from each of the Cas1 dimers. Cas1 cuts within the 3'-overhang, to generate a 33-nucleotide DNA that is probably incorporated into the CRISPR leader by a cut-and-paste mechanism. Cas1 alone endonucleolytically cleaves linear ssRNA, ssDNA and short (34 base) dsDNA as well as branched DNA substrates such as Holliday junctions, replication forks and 5'-flap DNA substrates. In vitro catalyzes a concerted transesterification reaction on branched DNA, as would be expected during integration of protospacers into the CRISPR leader sequence; Cas2 is not required in vitro. This reaction requires a 3'-OH group at the branch point. Genetic interactions suggest Cas1 interacts with components of the RecBC and RuvB DNA repair systems. In Escherichia coli (strain K12), this protein is CRISPR-associated endonuclease Cas1 (ygbT).